Here is a 437-residue protein sequence, read N- to C-terminus: Mannan endo-1,4-beta-mannosidase A (437 aa).

Residues 1–19 (MMMLSKSLLSAATAASALA) form the signal peptide. A propeptide spanning residues 20-27 (AVLQPVPR) is cleaved from the precursor. The catalytic stretch occupies residues 28 to 376 (ASSFVTISGT…VDAINGGTTT (349 aa)). Residues Cys-53 and Cys-56 are joined by a disulfide bond. N-linked (GlcNAc...) asparagine glycosylation is found at Asn-157 and Asn-184. Residue Glu-196 is the Proton donor/acceptor of the active site. A substrate-binding site is contributed by 196–198 (EPR). A disulfide bridge links Cys-199 with Cys-202. Substrate contacts are provided by Glu-232 and Trp-274. Asn-277 is a glycosylation site (N-linked (GlcNAc...) asparagine). Cys-292 and Cys-299 are disulfide-bonded. Residue Glu-303 is the Nucleophile of the active site. Cys-311 and Cys-361 are disulfide-bonded. Residue Asn-355 is glycosylated (N-linked (GlcNAc...) asparagine). Residues 372–399 (GGTTTPPPVSSTTTTSSRTSSTPPPPGG) are disordered. The tract at residues 377–399 (PPPVSSTTTTSSRTSSTPPPPGG) is linker. Residues 381–392 (SSTTTTSSRTSS) show a composition bias toward low complexity. One can recognise a CBM1 domain in the interval 400–435 (SCSPLYGQCGGSGYTGPTCCAQGTCIYSNYWYSQCL).

It belongs to the glycosyl hydrolase 5 (cellulase A) family. In terms of assembly, monomer.

The protein resides in the secreted. The catalysed reaction is Random hydrolysis of (1-&gt;4)-beta-D-mannosidic linkages in mannans, galactomannans and glucomannans.. Functionally, endo-1,4-mannanase that catalyzes the random hydrolysis of (1-&gt;4)-beta-D-mannosidic linkages in mannans and heteromannans. It is a crucial enzyme for depolymerization of seed galactomannans and wood galactoglucomannans. Active against locust bean gum and ivory nut mannan, releasing mainly tri- and disaccharides. Also has transglycosylation activity. Transglycosylation of two mannotrioses into a mannohexaose is the major transglycosylation route. The protein is Mannan endo-1,4-beta-mannosidase A of Hypocrea jecorina (strain ATCC 56765 / BCRC 32924 / NRRL 11460 / Rut C-30) (Trichoderma reesei).